Consider the following 336-residue polypeptide: Holliday junction branch migration complex subunit RuvB (336 aa).

Residues 1-182 (MAKRMITTEL…FGVVHRLEFY (182 aa)) form a large ATPase domain (RuvB-L) region. Residues Leu21, Arg22, Gly63, Lys66, Thr67, Thr68, 129 to 131 (EDY), Arg172, Tyr182, and Arg219 each bind ATP. Thr67 is a binding site for Mg(2+). A small ATPAse domain (RuvB-S) region spans residues 183–253 (TTEELKEIIT…VARFALDILE (71 aa)). Residues 256–336 (KLGLDHIDRQ…GLPYENKELS (81 aa)) are head domain (RuvB-H). The DNA site is built by Arg311 and Arg316.

The protein belongs to the RuvB family. In terms of assembly, homohexamer. Forms an RuvA(8)-RuvB(12)-Holliday junction (HJ) complex. HJ DNA is sandwiched between 2 RuvA tetramers; dsDNA enters through RuvA and exits via RuvB. An RuvB hexamer assembles on each DNA strand where it exits the tetramer. Each RuvB hexamer is contacted by two RuvA subunits (via domain III) on 2 adjacent RuvB subunits; this complex drives branch migration. In the full resolvosome a probable DNA-RuvA(4)-RuvB(12)-RuvC(2) complex forms which resolves the HJ.

It localises to the cytoplasm. It carries out the reaction ATP + H2O = ADP + phosphate + H(+). In terms of biological role, the RuvA-RuvB-RuvC complex processes Holliday junction (HJ) DNA during genetic recombination and DNA repair, while the RuvA-RuvB complex plays an important role in the rescue of blocked DNA replication forks via replication fork reversal (RFR). RuvA specifically binds to HJ cruciform DNA, conferring on it an open structure. The RuvB hexamer acts as an ATP-dependent pump, pulling dsDNA into and through the RuvAB complex. RuvB forms 2 homohexamers on either side of HJ DNA bound by 1 or 2 RuvA tetramers; 4 subunits per hexamer contact DNA at a time. Coordinated motions by a converter formed by DNA-disengaged RuvB subunits stimulates ATP hydrolysis and nucleotide exchange. Immobilization of the converter enables RuvB to convert the ATP-contained energy into a lever motion, pulling 2 nucleotides of DNA out of the RuvA tetramer per ATP hydrolyzed, thus driving DNA branch migration. The RuvB motors rotate together with the DNA substrate, which together with the progressing nucleotide cycle form the mechanistic basis for DNA recombination by continuous HJ branch migration. Branch migration allows RuvC to scan DNA until it finds its consensus sequence, where it cleaves and resolves cruciform DNA. The sequence is that of Holliday junction branch migration complex subunit RuvB from Lachnoclostridium phytofermentans (strain ATCC 700394 / DSM 18823 / ISDg) (Clostridium phytofermentans).